A 294-amino-acid polypeptide reads, in one-letter code: RNA exonuclease 4 (294 aa).

Residues 1–13 (MVLSSNWLSLQKS) are compositionally biased toward polar residues. Positions 1–56 (MVLSSNWLSLQKSTDSDSVNKNKGGKKTKSNSKKRTVSVKKDKQYVDKKKKNGTGS) are disordered. A compositionally biased stretch (basic residues) spans 23–38 (KGGKKTKSNSKKRTVS). Positions 119-271 (YVSMDCEFVG…EDARATMLLY (153 aa)) constitute an Exonuclease domain.

Belongs to the REXO4 family.

It localises to the nucleus. Its function is as follows. Exoribonuclease involved in ribosome biosynthesis. Involved in the processing of ITS1, the internal transcribed spacer localized between the 18S and 5.8S rRNAs. This Kluyveromyces lactis (strain ATCC 8585 / CBS 2359 / DSM 70799 / NBRC 1267 / NRRL Y-1140 / WM37) (Yeast) protein is RNA exonuclease 4 (REX4).